We begin with the raw amino-acid sequence, 273 residues long: 4-hydroxy-tetrahydrodipicolinate reductase (273 aa).

12-17 (GAMGRM) contacts NAD(+). Lys39 serves as a coordination point for NADP(+). Residues 102–104 (GTT) and 126–129 (ASNF) each bind NAD(+). The active-site Proton donor/acceptor is the His159. A (S)-2,3,4,5-tetrahydrodipicolinate-binding site is contributed by His160. The active-site Proton donor is the Lys163. A (S)-2,3,4,5-tetrahydrodipicolinate-binding site is contributed by 169–170 (GT).

Belongs to the DapB family. As to quaternary structure, homotetramer.

It localises to the cytoplasm. It carries out the reaction (S)-2,3,4,5-tetrahydrodipicolinate + NAD(+) + H2O = (2S,4S)-4-hydroxy-2,3,4,5-tetrahydrodipicolinate + NADH + H(+). The catalysed reaction is (S)-2,3,4,5-tetrahydrodipicolinate + NADP(+) + H2O = (2S,4S)-4-hydroxy-2,3,4,5-tetrahydrodipicolinate + NADPH + H(+). It functions in the pathway amino-acid biosynthesis; L-lysine biosynthesis via DAP pathway; (S)-tetrahydrodipicolinate from L-aspartate: step 4/4. Its function is as follows. Catalyzes the conversion of 4-hydroxy-tetrahydrodipicolinate (HTPA) to tetrahydrodipicolinate. This chain is 4-hydroxy-tetrahydrodipicolinate reductase, found in Buchnera aphidicola subsp. Schizaphis graminum (strain Sg).